A 473-amino-acid polypeptide reads, in one-letter code: Maltose fermentation regulatory protein MAL63 (473 aa).

The segment at residues 8–34 (CDCCRVRRVKCDRNKPCNRCIQRNLNC) is a DNA-binding region (zn(2)-C6 fungal-type). The Nuclear localization signal signature appears at 41–49 (KKRGPKSIR).

It belongs to the MAL13 family.

Its subcellular location is the nucleus. Its function is as follows. Regulates the coordinate transcription of structural MAL6S (maltase) and MAL6T (maltose permease) genes. The polypeptide is Maltose fermentation regulatory protein MAL63 (MAL63) (Saccharomyces cerevisiae (Baker's yeast)).